We begin with the raw amino-acid sequence, 628 residues long: Neutral/alkaline invertase 1, mitochondrial (628 aa).

The N-terminal 35 residues, 1 to 35 (MAAAAISHLRRGAPRHARALLYLSTRRFSSSSAAG), are a transit peptide targeting the mitochondrion. Positions 79 to 90 (ASSAPPLESPPI) are enriched in low complexity. The segment at 79–113 (ASSAPPLESPPIEELPDDATPPPEEEPGLPAPEKD) is disordered.

The protein belongs to the glycosyl hydrolase 100 family. Expressed in roots, leaf and stems.

Its subcellular location is the mitochondrion. The catalysed reaction is Hydrolysis of terminal non-reducing beta-D-fructofuranoside residues in beta-D-fructofuranosides.. Mitochondrial invertase that cleaves sucrose into glucose and fructose. The chain is Neutral/alkaline invertase 1, mitochondrial from Oryza sativa subsp. japonica (Rice).